The chain runs to 321 residues: MRIGHYQLRNRLIAAPMAGITDRPFRTLCYEMGAGLTVSEMMSSNPQVWESDKSRLRMVHVDEPGIRTVQIAGSVPKEMAAAARINVESGAQIIDINMGCPAKKVNRKLAGSALLQYPDQVKSILTAVVKAVDVPVTLKIRTGWEPEHRNCVEIAQLAEECGIQALTIHGRTRACLFNGDAEYDSIRAVKQKVSIPVIANGDITDPLKARAVLDYTGADALMIGRAAQGRPWIFREIQHYLDTGELLPPLPLAEVKRLLCAHVRELHGFYGQAKGYRIARKHVSWYLQEHAPDDQFRRTFNAIEDSSEQLEALEAYFENFA.

Residues 16-18 and Gln70 each bind FMN; that span reads PMA. Cys100 acts as the Proton donor in catalysis. Residues Lys139, 200-202, and 224-225 each bind FMN; these read NGD and GR.

This sequence belongs to the Dus family. DusB subfamily. The cofactor is FMN.

It carries out the reaction a 5,6-dihydrouridine in tRNA + NAD(+) = a uridine in tRNA + NADH + H(+). The catalysed reaction is a 5,6-dihydrouridine in tRNA + NADP(+) = a uridine in tRNA + NADPH + H(+). Catalyzes the synthesis of 5,6-dihydrouridine (D), a modified base found in the D-loop of most tRNAs, via the reduction of the C5-C6 double bond in target uridines. This chain is tRNA-dihydrouridine synthase B, found in Klebsiella pneumoniae.